The chain runs to 122 residues: Large ribosomal subunit protein uL14c (122 aa).

The protein belongs to the universal ribosomal protein uL14 family. Part of the 50S ribosomal subunit.

Its subcellular location is the plastid. It localises to the chloroplast. In terms of biological role, binds to 23S rRNA. This chain is Large ribosomal subunit protein uL14c, found in Piper cenocladum (Ant piper).